The sequence spans 142 residues: Large ribosomal subunit protein bL17 (142 aa).

Belongs to the bacterial ribosomal protein bL17 family. In terms of assembly, part of the 50S ribosomal subunit. Contacts protein L32.

In Brucella abortus (strain S19), this protein is Large ribosomal subunit protein bL17.